Reading from the N-terminus, the 185-residue chain is Calcium-binding protein K-like (185 aa).

2 consecutive EF-hand domains span residues tryptophan 60–alanine 95 and proline 96–cysteine 131. The Ca(2+) site is built by aspartate 73, aspartate 75, asparagine 77, glutamate 84, aspartate 109, aspartate 111, serine 113, tyrosine 115, and glutamate 120.

This sequence belongs to the recoverin family.

The polypeptide is Calcium-binding protein K-like (Dictyostelium discoideum (Social amoeba)).